The sequence spans 211 residues: Thymidylate kinase (211 aa).

11 to 18 contacts ATP; the sequence is GPDGAGKT.

It belongs to the thymidylate kinase family.

It carries out the reaction dTMP + ATP = dTDP + ADP. In terms of biological role, phosphorylation of dTMP to form dTDP in both de novo and salvage pathways of dTTP synthesis. This chain is Thymidylate kinase, found in Streptococcus uberis (strain ATCC BAA-854 / 0140J).